Reading from the N-terminus, the 657-residue chain is DNA ligase (657 aa).

80–81 lines the NAD(+) pocket; the sequence is SL. The N6-AMP-lysine intermediate role is filled by Lys-104. Arg-125, Glu-159, and Lys-297 together coordinate NAD(+). 4 residues coordinate Zn(2+): Cys-386, Cys-389, Cys-406, and Cys-411. Residues 571-657 form the BRCT domain; sequence QSEQIFENLN…EWLNNGVRPE (87 aa).

This sequence belongs to the NAD-dependent DNA ligase family. LigA subfamily. The cofactor is Mg(2+). Requires Mn(2+) as cofactor.

It catalyses the reaction NAD(+) + (deoxyribonucleotide)n-3'-hydroxyl + 5'-phospho-(deoxyribonucleotide)m = (deoxyribonucleotide)n+m + AMP + beta-nicotinamide D-nucleotide.. Functionally, DNA ligase that catalyzes the formation of phosphodiester linkages between 5'-phosphoryl and 3'-hydroxyl groups in double-stranded DNA using NAD as a coenzyme and as the energy source for the reaction. It is essential for DNA replication and repair of damaged DNA. The protein is DNA ligase of Ruminiclostridium cellulolyticum (strain ATCC 35319 / DSM 5812 / JCM 6584 / H10) (Clostridium cellulolyticum).